Consider the following 313-residue polypeptide: MPVRIPDHLPAAEVLESENIFVMSETRAANQDIRPMKVLILNLMPNKIETETQLLRLLGNTPLQVDVDLLRIHDKESKHTSIDHMNTFYRDFEAVRHKNYDGLIITGAPLGQIDFEDVVYWDHIREIIDWSQEHVTSVLFLCWAAHAGLYHLYGLNRKILQQKRSGVFVHRRTSQHFPLLRGFDDEFFAPHSRFAEMDVEEIRQHPQLQLLAESDEAGAYLVLSRNNRNLFVMGHPEYQKSTLNEEYQRDLSQGLDPNVPQNYYRNDDPKADAIARWHSHGSLLVSNWLNYYVYQLTPYDLSDMTAMTPWESR.

Residue cysteine 142 is the Acyl-thioester intermediate of the active site. Residues lysine 163 and serine 192 each coordinate substrate. Residue histidine 235 is the Proton acceptor of the active site. Glutamate 237 is an active-site residue. Substrate is bound at residue arginine 249.

It belongs to the MetA family.

It localises to the cytoplasm. The enzyme catalyses L-homoserine + succinyl-CoA = O-succinyl-L-homoserine + CoA. The protein operates within amino-acid biosynthesis; L-methionine biosynthesis via de novo pathway; O-succinyl-L-homoserine from L-homoserine: step 1/1. Functionally, transfers a succinyl group from succinyl-CoA to L-homoserine, forming succinyl-L-homoserine. The sequence is that of Homoserine O-succinyltransferase from Shewanella baltica (strain OS223).